The primary structure comprises 429 residues: Bifunctional protein GlmU (429 aa).

The tract at residues 1–223 (MKTSILILAA…EDEFMGINDK (223 aa)) is pyrophosphorylase. UDP-N-acetyl-alpha-D-glucosamine-binding positions include 8–11 (LAAG), K22, and 81–82 (GT). D102 is a Mg(2+) binding site. 4 residues coordinate UDP-N-acetyl-alpha-D-glucosamine: G135, E149, N164, and N221. Position 221 (N221) interacts with Mg(2+). The interval 224–244 (FELSIAENFMQEKIKKYWMQQ) is linker. Residues 245 to 429 (GVIFHLPQST…KDYYYKKFQK (185 aa)) form an N-acetyltransferase region. Positions 308 and 325 each coordinate UDP-N-acetyl-alpha-D-glucosamine. H336 serves as the catalytic Proton acceptor. The UDP-N-acetyl-alpha-D-glucosamine site is built by Y339 and N350. Residues 359–360 (NY), S378, A396, and R413 contribute to the acetyl-CoA site.

It in the N-terminal section; belongs to the N-acetylglucosamine-1-phosphate uridyltransferase family. This sequence in the C-terminal section; belongs to the transferase hexapeptide repeat family. In terms of assembly, homotrimer. Mg(2+) is required as a cofactor.

The protein resides in the cytoplasm. The enzyme catalyses alpha-D-glucosamine 1-phosphate + acetyl-CoA = N-acetyl-alpha-D-glucosamine 1-phosphate + CoA + H(+). It catalyses the reaction N-acetyl-alpha-D-glucosamine 1-phosphate + UTP + H(+) = UDP-N-acetyl-alpha-D-glucosamine + diphosphate. The protein operates within nucleotide-sugar biosynthesis; UDP-N-acetyl-alpha-D-glucosamine biosynthesis; N-acetyl-alpha-D-glucosamine 1-phosphate from alpha-D-glucosamine 6-phosphate (route II): step 2/2. Its pathway is nucleotide-sugar biosynthesis; UDP-N-acetyl-alpha-D-glucosamine biosynthesis; UDP-N-acetyl-alpha-D-glucosamine from N-acetyl-alpha-D-glucosamine 1-phosphate: step 1/1. It functions in the pathway bacterial outer membrane biogenesis; LPS lipid A biosynthesis. Catalyzes the last two sequential reactions in the de novo biosynthetic pathway for UDP-N-acetylglucosamine (UDP-GlcNAc). The C-terminal domain catalyzes the transfer of acetyl group from acetyl coenzyme A to glucosamine-1-phosphate (GlcN-1-P) to produce N-acetylglucosamine-1-phosphate (GlcNAc-1-P), which is converted into UDP-GlcNAc by the transfer of uridine 5-monophosphate (from uridine 5-triphosphate), a reaction catalyzed by the N-terminal domain. This is Bifunctional protein GlmU from Campylobacter jejuni subsp. jejuni serotype O:23/36 (strain 81-176).